Here is a 1026-residue protein sequence, read N- to C-terminus: Multidrug resistance protein MdtC (1026 aa).

A run of 11 helical transmembrane segments spans residues 15–35, 333–353, 360–380, 387–407, 431–451, 463–483, 528–548, 853–873, 897–917, 953–973, and 984–1004; these read ILIAAAITLCGILGFRLLPVA, EVEETLAISVALVILVVFLFL, LIPAVAVPVSLIGTFAAMYLC, LSLMALTIATGFVVDDAIVVL, VGFTVISMSLSLVAVFLPLLL, FAVTLSVAIGISLVVSLTLTP, LVGVVFLGTVALNIWLYIAIP, LILIVAAIATVYIVLGILYES, LFNAPFSLIALIGIMLLIGIV, PIMMTTLAALFGALPLVLSGG, and ITIVGGLVMSQLLTLYTTPVV.

The protein belongs to the resistance-nodulation-cell division (RND) (TC 2.A.6) family. MdtC subfamily. As to quaternary structure, part of a tripartite efflux system composed of MdtA, MdtB and MdtC. MdtC forms a heteromultimer with MdtB.

The protein resides in the cell inner membrane. The chain is Multidrug resistance protein MdtC from Salmonella gallinarum (strain 287/91 / NCTC 13346).